A 122-amino-acid chain; its full sequence is Small ribosomal subunit protein uS13 (122 aa).

Positions 95 to 116 are enriched in basic residues; the sequence is GLPVRGQKTKTNARTRKGRRKT. The interval 95–122 is disordered; it reads GLPVRGQKTKTNARTRKGRRKTVGAATK.

It belongs to the universal ribosomal protein uS13 family. In terms of assembly, part of the 30S ribosomal subunit. Forms a loose heterodimer with protein S19. Forms two bridges to the 50S subunit in the 70S ribosome.

Its function is as follows. Located at the top of the head of the 30S subunit, it contacts several helices of the 16S rRNA. In the 70S ribosome it contacts the 23S rRNA (bridge B1a) and protein L5 of the 50S subunit (bridge B1b), connecting the 2 subunits; these bridges are implicated in subunit movement. Contacts the tRNAs in the A and P-sites. This chain is Small ribosomal subunit protein uS13, found in Campylobacter concisus (strain 13826).